We begin with the raw amino-acid sequence, 1293 residues long: DNA-directed RNA polymerase subunit beta' (1293 aa).

The Zn(2+) site is built by Cys60, Cys62, Cys75, and Cys78. Mg(2+) contacts are provided by Asp535, Asp537, and Asp539. Residues Cys877, Cys953, Cys960, and Cys963 each contribute to the Zn(2+) site.

The protein belongs to the RNA polymerase beta' chain family. The RNAP catalytic core consists of 2 alpha, 1 beta, 1 beta' and 1 omega subunit. When a sigma factor is associated with the core the holoenzyme is formed, which can initiate transcription. The cofactor is Mg(2+). Zn(2+) is required as a cofactor.

It catalyses the reaction RNA(n) + a ribonucleoside 5'-triphosphate = RNA(n+1) + diphosphate. Functionally, DNA-dependent RNA polymerase catalyzes the transcription of DNA into RNA using the four ribonucleoside triphosphates as substrates. The protein is DNA-directed RNA polymerase subunit beta' of Kineococcus radiotolerans (strain ATCC BAA-149 / DSM 14245 / SRS30216).